The sequence spans 338 residues: Phenylalanine--tRNA ligase alpha subunit (338 aa).

Residue E252 coordinates Mg(2+).

This sequence belongs to the class-II aminoacyl-tRNA synthetase family. Phe-tRNA synthetase alpha subunit type 1 subfamily. As to quaternary structure, tetramer of two alpha and two beta subunits. Requires Mg(2+) as cofactor.

It is found in the cytoplasm. The catalysed reaction is tRNA(Phe) + L-phenylalanine + ATP = L-phenylalanyl-tRNA(Phe) + AMP + diphosphate + H(+). This is Phenylalanine--tRNA ligase alpha subunit from Pseudomonas syringae pv. tomato (strain ATCC BAA-871 / DC3000).